We begin with the raw amino-acid sequence, 566 residues long: Putative sulfite reductase [NADPH] hemoprotein beta-component (566 aa).

Residues cysteine 430, cysteine 436, cysteine 475, and cysteine 479 each contribute to the [4Fe-4S] cluster site. Cysteine 479 is a binding site for siroheme.

Belongs to the nitrite and sulfite reductase 4Fe-4S domain family. In terms of assembly, alpha(8)-beta(8). The alpha component is a flavoprotein, the beta component is a hemoprotein. It depends on siroheme as a cofactor. The cofactor is [4Fe-4S] cluster.

The enzyme catalyses hydrogen sulfide + 3 NADP(+) + 3 H2O = sulfite + 3 NADPH + 4 H(+). It participates in sulfur metabolism; hydrogen sulfide biosynthesis; hydrogen sulfide from sulfite (NADPH route): step 1/1. Component of the sulfite reductase complex that catalyzes the 6-electron reduction of sulfite to sulfide. This is one of several activities required for the biosynthesis of L-cysteine from sulfate. The polypeptide is Putative sulfite reductase [NADPH] hemoprotein beta-component (Buchnera aphidicola subsp. Schizaphis graminum (strain Sg)).